Consider the following 306-residue polypeptide: Embryogenic cell protein 40 (306 aa).

Disordered regions lie at residues 1 to 57 (MADL…ASHG), 80 to 171 (AATH…GGLG), and 188 to 306 (GTGI…PTSH). Residues 12-23 (IQLTDQHGNPVQ) show a composition bias toward polar residues. Residues 32-44 (VHITGVATTGATT) are compositionally biased toward low complexity. Composition is skewed to gly residues over residues 85-119 (GSHGGTGTHGVGPTGVGAAHGGTGTTTGLGTGTGT), 127-151 (GPTGIGGTHGVGSTGIGGAHGGTGV), and 159-171 (GPTGTGAAHGGLG). Positions 194 to 204 (GSAPASAGSHS) are enriched in low complexity. Composition is skewed to basic and acidic residues over residues 205–218 (HAPEKKTALGEQLH) and 243–259 (KIKEKLGGGKHKKDEHT). Residues 260 to 278 (TVATTKTTTAAHPGGAAVA) are compositionally biased toward low complexity. Basic and acidic residues predominate over residues 279-298 (VEHHEHEKKSMLDKIKDKLP).

This sequence belongs to the plant dehydrin family.

This chain is Embryogenic cell protein 40 (ECP40), found in Daucus carota (Wild carrot).